The chain runs to 306 residues: Serine/threonine-protein phosphatase PP-X homolog 4 (306 aa).

Mn(2+) is bound by residues aspartate 53, histidine 55, aspartate 81, and asparagine 113. The active-site Proton donor is the histidine 114. 2 residues coordinate Mn(2+): histidine 163 and histidine 237.

The protein belongs to the PPP phosphatase family. PP-4 (PP-X) subfamily. Mn(2+) serves as cofactor.

It catalyses the reaction O-phospho-L-seryl-[protein] + H2O = L-seryl-[protein] + phosphate. The catalysed reaction is O-phospho-L-threonyl-[protein] + H2O = L-threonyl-[protein] + phosphate. In Paramecium tetraurelia, this protein is Serine/threonine-protein phosphatase PP-X homolog 4 (Ppx4).